The chain runs to 244 residues: uncharacterized protein (244 aa).

The signal sequence occupies residues 1 to 18; that stretch reads MQFSVLCKFLLLVTAVMA. Topologically, residues 19 to 223 are lumenal; that stretch reads QTEYTPGFTT…TTIPSSAVHY (205 aa). Low complexity-rich tracts occupy residues 55-65 and 75-128; these read ETSTHSVTSTN and TSHN…TTHV. The tract at residues 55 to 128 is disordered; sequence ETSTHSVTST…TTVVPPTTHV (74 aa). Residues 224–244 traverse the membrane as a helical segment; sequence ASPSGLLALVVMLISAFAFLA.

The protein localises to the endoplasmic reticulum membrane. This is an uncharacterized protein from Schizosaccharomyces pombe (strain 972 / ATCC 24843) (Fission yeast).